A 346-amino-acid chain; its full sequence is 3-dehydroquinate synthase (346 aa).

Residues 62 to 67, 96 to 100, 120 to 121, Lys133, and Lys142 contribute to the NAD(+) site; these read DGEQYK, GVISD, and TT. Zn(2+)-binding residues include Glu175, His234, and His251.

It belongs to the sugar phosphate cyclases superfamily. Dehydroquinate synthase family. The cofactor is Co(2+). Zn(2+) serves as cofactor. It depends on NAD(+) as a cofactor.

The protein resides in the cytoplasm. The catalysed reaction is 7-phospho-2-dehydro-3-deoxy-D-arabino-heptonate = 3-dehydroquinate + phosphate. It functions in the pathway metabolic intermediate biosynthesis; chorismate biosynthesis; chorismate from D-erythrose 4-phosphate and phosphoenolpyruvate: step 2/7. Functionally, catalyzes the conversion of 3-deoxy-D-arabino-heptulosonate 7-phosphate (DAHP) to dehydroquinate (DHQ). The chain is 3-dehydroquinate synthase from Campylobacter fetus subsp. fetus (strain 82-40).